The chain runs to 694 residues: Inactive protein-arginine deiminase type-6 (694 aa).

S10 and S446 each carry phosphoserine.

It belongs to the protein arginine deiminase family. Homodimers. Associates with alpha-tubulin. Phosphorylation at Ser-10, possibly by RSK-type kinases, and Ser-446 creates binding sites for 14-3-3 proteins. As to expression, highly expressed in oocytes and weakly expressed in other somatic tissues.

The protein resides in the cytoplasm. It is found in the cytoplasmic vesicle. The protein localises to the secretory vesicle. Its subcellular location is the cortical granule. It localises to the nucleus. In terms of biological role, structural constituent of cytoplasmic lattices, which plays a key role in early embryonic development. Cytoplasmic lattices consist in fibrous structures found in the cytoplasm of oocytes and preimplantation embryos. They are required to store maternal proteins critical for embryonic development, such as ribosomal proteins and proteins that control epigenetic reprogramming of the preimplantation embryo, and prevent their degradation or activation. In contrast to other members of the family, does not show protein-arginine deiminase activity due to its inability to bind Ca(2+). This is Inactive protein-arginine deiminase type-6 from Homo sapiens (Human).